A 130-amino-acid polypeptide reads, in one-letter code: Protein NrdI (130 aa).

This sequence belongs to the NrdI family.

Functionally, probably involved in ribonucleotide reductase function. The polypeptide is Protein NrdI (Bartonella bacilliformis (strain ATCC 35685 / KC583 / Herrer 020/F12,63)).